Reading from the N-terminus, the 103-residue chain is MSEFNNVSVVKEANIYFEGKVTSRTVIFPDGSRKTLGLMLPGEYTFNTGSAELMEILSGEMTVVLPGSPDPVAIKGGEAFEVPENSSFKVNVTAVSDYICSFL.

It belongs to the nucleoside phosphorylase PpnP family.

The enzyme catalyses a purine D-ribonucleoside + phosphate = a purine nucleobase + alpha-D-ribose 1-phosphate. It carries out the reaction adenosine + phosphate = alpha-D-ribose 1-phosphate + adenine. It catalyses the reaction cytidine + phosphate = cytosine + alpha-D-ribose 1-phosphate. The catalysed reaction is guanosine + phosphate = alpha-D-ribose 1-phosphate + guanine. The enzyme catalyses inosine + phosphate = alpha-D-ribose 1-phosphate + hypoxanthine. It carries out the reaction thymidine + phosphate = 2-deoxy-alpha-D-ribose 1-phosphate + thymine. It catalyses the reaction uridine + phosphate = alpha-D-ribose 1-phosphate + uracil. The catalysed reaction is xanthosine + phosphate = alpha-D-ribose 1-phosphate + xanthine. Functionally, catalyzes the phosphorolysis of diverse nucleosides, yielding D-ribose 1-phosphate and the respective free bases. Can use uridine, adenosine, guanosine, cytidine, thymidine, inosine and xanthosine as substrates. Also catalyzes the reverse reactions. The chain is Pyrimidine/purine nucleoside phosphorylase from Citrifermentans bemidjiense (strain ATCC BAA-1014 / DSM 16622 / JCM 12645 / Bem) (Geobacter bemidjiensis).